The following is a 597-amino-acid chain: Vacuolar protein sorting-associated protein 33A (597 aa).

It belongs to the STXBP/unc-18/SEC1 family. In terms of assembly, core component of at least two putative endosomal tethering complexes, the homotypic fusion and vacuole protein sorting (HOPS) complex and the class C core vacuole/endosome tethering (CORVET) complex. Their common core is composed of the class C Vps proteins VPS11, VPS16, VPS18 and VPS33A, which in HOPS further associates with VPS39 and VPS41 and in CORVET with VPS8 and TGFBRAP1. Interacts with RAB5C, UVRAG, STX17, MON1A and MON1B. Associates with adaptor protein complex 3 (AP-3) and clathrin. Interacts with PLEKHM1. Ubiquitous.

It localises to the cytoplasmic vesicle. The protein localises to the late endosome membrane. The protein resides in the lysosome membrane. Its subcellular location is the early endosome. It is found in the autophagosome. It localises to the clathrin-coated vesicle. Plays a role in vesicle-mediated protein trafficking to lysosomal compartments including the endocytic membrane transport and autophagic pathways. Believed to act as a core component of the putative HOPS and CORVET endosomal tethering complexes which are proposed to be involved in the Rab5-to-Rab7 endosome conversion probably implicating MON1A/B, and via binding SNAREs and SNARE complexes to mediate tethering and docking events during SNARE-mediated membrane fusion. The HOPS complex is proposed to be recruited to Rab7 on the late endosomal membrane and to regulate late endocytic, phagocytic and autophagic traffic towards lysosomes. The CORVET complex is proposed to function as a Rab5 effector to mediate early endosome fusion probably in specific endosome subpopulations. Required for fusion of endosomes and autophagosomes with lysosomes; the function is dependent on its association with VPS16 but not VIPAS39. The function in autophagosome-lysosome fusion implicates STX17 but not UVRAG. This is Vacuolar protein sorting-associated protein 33A (Vps33a) from Rattus norvegicus (Rat).